The chain runs to 330 residues: Mas-related G-protein coupled receptor member B8 (330 aa).

Topologically, residues 1–33 (MDSSFPDWNIEFREQNESYFMESSSCDMSLAMS) are extracellular. Asparagine 16 carries N-linked (GlcNAc...) asparagine glycosylation. Residues 34–54 (LLSIIIAIIGLTGNVIVLQLL) form a helical membrane-spanning segment. Residues 55 to 62 (GFHMHRNA) lie on the Cytoplasmic side of the membrane. The helical transmembrane segment at 63–83 (FSVYIFNLSGANFLFLCTHIV) threads the bilayer. The Extracellular segment spans residues 84–101 (FSLENLIRQFHYIDIHMA). The helical transmembrane segment at 102-122 (LFSVNVTILAYLAGVSMITAI) threads the bilayer. Topologically, residues 123-146 (SVEYWLSVLWPTWYHAQRPKHTST) are cytoplasmic. The helical transmembrane segment at 147-167 (VICTLLWVFSLLLTLWNWIIC) threads the bilayer. Topologically, residues 168–177 (KVLDYIYNWD) are extracellular. A helical membrane pass occupies residues 178–198 (MCWKLALIIVVWLLVLFVVLS). At 199 to 219 (RSNQALLFRVFCGSQQTPVTR) the chain is on the cytoplasmic side. Residues 220-240 (LLVTIMLTALVVLICGFGIGI) traverse the membrane as a helical segment. The Extracellular segment spans residues 241–260 (CFFYWKKEENSIMPCGYFYE). A helical membrane pass occupies residues 261–281 (TILLLSGVNSCANPIICLFVG). Over 282–330 (SIKHCQFQCGTLRLILQRAIQESPEEEDEEVEEVVEQEGGEEDEESTTL) the chain is Cytoplasmic. Residues 302–330 (QESPEEEDEEVEEVVEQEGGEEDEESTTL) are disordered. Residues 304–330 (SPEEEDEEVEEVVEQEGGEEDEESTTL) show a composition bias toward acidic residues.

Belongs to the G-protein coupled receptor 1 family. Mas subfamily.

The protein localises to the membrane. Functionally, orphan receptor. Probably involved in the function of nociceptive neurons. May regulate nociceptor function and/or development, including the sensation or modulation of pain. This is Mas-related G-protein coupled receptor member B8 (Mrgprb8) from Mus musculus (Mouse).